Reading from the N-terminus, the 284-residue chain is D-tagatose-1,6-bisphosphate aldolase subunit GatY (284 aa).

Asp82 acts as the Proton donor in catalysis. His83 and His180 together coordinate Zn(2+). Gly181 is a dihydroxyacetone phosphate binding site. Residue His208 participates in Zn(2+) binding. Dihydroxyacetone phosphate is bound by residues 209–211 (GAS) and 230–233 (NVAT).

The protein belongs to the class II fructose-bisphosphate aldolase family. TagBP aldolase GatY subfamily. In terms of assembly, forms a complex with GatZ. Zn(2+) is required as a cofactor.

It carries out the reaction D-tagatofuranose 1,6-bisphosphate = D-glyceraldehyde 3-phosphate + dihydroxyacetone phosphate. It functions in the pathway carbohydrate metabolism; D-tagatose 6-phosphate degradation; D-glyceraldehyde 3-phosphate and glycerone phosphate from D-tagatose 6-phosphate: step 2/2. Catalytic subunit of the tagatose-1,6-bisphosphate aldolase GatYZ, which catalyzes the reversible aldol condensation of dihydroxyacetone phosphate (DHAP or glycerone-phosphate) with glyceraldehyde 3-phosphate (G3P) to produce tagatose 1,6-bisphosphate (TBP). Requires GatZ subunit for full activity and stability. Is involved in the catabolism of galactitol. This is D-tagatose-1,6-bisphosphate aldolase subunit GatY from Salmonella newport (strain SL254).